The primary structure comprises 1040 residues: DNA cross-link repair 1A protein (1040 aa).

A nuclear localization region region spans residues 1–190 (MLEDISEEDI…RAGDHPFSSP (190 aa)). The interval 15–76 (SKRKPKRVDP…LGNAGCQTSV (62 aa)) is disordered. Basic and acidic residues predominate over residues 53 to 65 (RAAEAKEVKDHEV). The UBZ4-type zinc finger occupies 119 to 149 (DGYCPNCQMPFSSLIGQTPRWHVFECLDSPP). Positions 122, 125, 140, and 144 each coordinate Zn(2+). Glycyl lysine isopeptide (Lys-Gly) (interchain with G-Cter in SUMO2) cross-links involve residues K202, K236, K269, K353, K361, K429, K488, K508, K517, K533, and K536. The interval 396–614 (LPYDLACTGG…KSLSDLEFDA (219 aa)) is nuclear focus formation. Disordered stretches follow at residues 582–602 (GINLNPVPSPNQKRSSQCKRK) and 623–651 (SVELSSERSQRQKKRCRKSNSLQEGACQK). Residue S590 is modified to Phosphoserine. Residues K668, K670, and K674 each participate in a glycyl lysine isopeptide (Lys-Gly) (interchain with G-Cter in SUMO2) cross-link.

The protein belongs to the DNA repair metallo-beta-lactamase (DRMBL) family. In terms of assembly, binds constitutively to TP53BP1. Binds CDC27, which is itself a component of the anaphase promoting complex (APC). Binds PIAS1. In terms of tissue distribution, expressed in brain, heart, kidney, liver, pancreas, placenta and skeletal muscle.

Its subcellular location is the nucleus. The catalysed reaction is a beta-lactam + H2O = a substituted beta-amino acid. With respect to regulation, beta-lactamase activity is inhibited by sulbactam. May be required for DNA interstrand cross-link repair. Also required for checkpoint mediated cell cycle arrest in early prophase in response to mitotic spindle poisons. Possesses beta-lactamase activity, catalyzing the hydrolysis of penicillin G and nitrocefin. Exhibits no activity towards other beta-lactam antibiotic classes including cephalosporins (cefotaxime) and carbapenems (imipenem). The protein is DNA cross-link repair 1A protein (DCLRE1A) of Homo sapiens (Human).